Reading from the N-terminus, the 187-residue chain is Large ribosomal subunit protein uL5 (187 aa).

Belongs to the universal ribosomal protein uL5 family. As to quaternary structure, part of the 50S ribosomal subunit; part of the 5S rRNA/L5/L18/L25 subcomplex. Contacts the 5S rRNA and the P site tRNA. Forms a bridge to the 30S subunit in the 70S ribosome.

In terms of biological role, this is one of the proteins that bind and probably mediate the attachment of the 5S RNA into the large ribosomal subunit, where it forms part of the central protuberance. In the 70S ribosome it contacts protein S13 of the 30S subunit (bridge B1b), connecting the 2 subunits; this bridge is implicated in subunit movement. Contacts the P site tRNA; the 5S rRNA and some of its associated proteins might help stabilize positioning of ribosome-bound tRNAs. In Mycobacterium avium (strain 104), this protein is Large ribosomal subunit protein uL5.